We begin with the raw amino-acid sequence, 629 residues long: 1-deoxy-D-xylulose-5-phosphate synthase (629 aa).

Residues H78 and 119-121 (AHS) each bind thiamine diphosphate. A Mg(2+)-binding site is contributed by D150. Thiamine diphosphate contacts are provided by residues 151–152 (GA), N179, Y286, and E368. N179 contributes to the Mg(2+) binding site.

It belongs to the transketolase family. DXPS subfamily. As to quaternary structure, homodimer. Requires Mg(2+) as cofactor. Thiamine diphosphate is required as a cofactor.

It carries out the reaction D-glyceraldehyde 3-phosphate + pyruvate + H(+) = 1-deoxy-D-xylulose 5-phosphate + CO2. It participates in metabolic intermediate biosynthesis; 1-deoxy-D-xylulose 5-phosphate biosynthesis; 1-deoxy-D-xylulose 5-phosphate from D-glyceraldehyde 3-phosphate and pyruvate: step 1/1. Its function is as follows. Catalyzes the acyloin condensation reaction between C atoms 2 and 3 of pyruvate and glyceraldehyde 3-phosphate to yield 1-deoxy-D-xylulose-5-phosphate (DXP). This is 1-deoxy-D-xylulose-5-phosphate synthase from Acidovorax ebreus (strain TPSY) (Diaphorobacter sp. (strain TPSY)).